Here is a 333-residue protein sequence, read N- to C-terminus: Flotillin-like protein FloA (333 aa).

2 helical membrane passes run 8-28 and 30-50; these read LMPIILLALALILISVVFTFI and VGLWISALAAGVNVGIFTLVG.

This sequence belongs to the flotillin-like FloA family. In terms of assembly, homooligomerizes.

It localises to the cell membrane. The protein localises to the membrane raft. Found in functional membrane microdomains (FMM) that may be equivalent to eukaryotic membrane rafts. FMMs are highly dynamic and increase in number as cells age. Flotillins are thought to be important factors in membrane fluidity. The sequence is that of Flotillin-like protein FloA from Desulfitobacterium hafniense (strain DSM 10664 / DCB-2).